Reading from the N-terminus, the 626-residue chain is Chaperone protein HtpG (626 aa).

An a; substrate-binding region spans residues 1-338; the sequence is MTANKNQKKT…SNDLPLNVSR (338 aa). Positions 339 to 553 are b; it reads EILQDHKLVY…SNEMSTQMAK (215 aa). The interval 554-626 is c; it reads LFSAAGQTVP…ARINDLLINN (73 aa).

This sequence belongs to the heat shock protein 90 family. In terms of assembly, homodimer.

Its subcellular location is the cytoplasm. In terms of biological role, molecular chaperone. Has ATPase activity. The polypeptide is Chaperone protein HtpG (Buchnera aphidicola subsp. Baizongia pistaciae (strain Bp)).